A 466-amino-acid chain; its full sequence is Uronate isomerase (466 aa).

This sequence belongs to the metallo-dependent hydrolases superfamily. Uronate isomerase family.

The catalysed reaction is D-glucuronate = D-fructuronate. The enzyme catalyses aldehydo-D-galacturonate = keto-D-tagaturonate. The protein operates within carbohydrate metabolism; pentose and glucuronate interconversion. The polypeptide is Uronate isomerase (Brucella canis (strain ATCC 23365 / NCTC 10854 / RM-666)).